The chain runs to 161 residues: Ribosome maturation factor RimP (161 aa).

It belongs to the RimP family.

The protein resides in the cytoplasm. Required for maturation of 30S ribosomal subunits. This chain is Ribosome maturation factor RimP, found in Desulfosudis oleivorans (strain DSM 6200 / JCM 39069 / Hxd3) (Desulfococcus oleovorans).